We begin with the raw amino-acid sequence, 533 residues long: Retinoid isomerohydrolase (533 aa).

N-acetylserine is present on serine 2. Phosphothreonine is present on residues threonine 101 and threonine 105. A lipid anchor (S-palmitoyl cysteine; in membrane form) is attached at cysteine 112. The residue at position 113 (lysine 113) is an N6-acetyllysine. Serine 117 carries the phosphoserine modification. Residue histidine 180 coordinates Fe cation. Residue cysteine 231 is the site of S-palmitoyl cysteine; in membrane form attachment. The Fe cation site is built by histidine 241 and histidine 313. Residues cysteine 329 and cysteine 330 are each lipidated (S-palmitoyl cysteine; in membrane form). A Fe cation-binding site is contributed by histidine 527.

This sequence belongs to the carotenoid oxygenase family. As to quaternary structure, interacts with MYO7A; this mediates light-dependent intracellular transport of RPE65. Requires Fe(2+) as cofactor. In terms of processing, palmitoylation by LRAT regulates ligand binding specificity; the palmitoylated form (membrane form) specifically binds all-trans-retinyl-palmitate, while the soluble unpalmitoylated form binds all-trans-retinol (vitamin A). Retinal pigment epithelium specific.

The protein localises to the cytoplasm. It localises to the cell membrane. The protein resides in the microsome membrane. The catalysed reaction is an all-trans-retinyl ester + H2O = 11-cis-retinol + a fatty acid + H(+). The enzyme catalyses lutein = (3R,3'S)-zeaxanthin. It carries out the reaction all-trans-retinyl hexadecanoate + H2O = 11-cis-retinol + hexadecanoate + H(+). Its function is as follows. Critical isomerohydrolase in the retinoid cycle involved in regeneration of 11-cis-retinal, the chromophore of rod and cone opsins. Catalyzes the cleavage and isomerization of all-trans-retinyl fatty acid esters to 11-cis-retinol which is further oxidized by 11-cis retinol dehydrogenase to 11-cis-retinal for use as visual chromophore. Essential for the production of 11-cis retinal for both rod and cone photoreceptors. Also capable of catalyzing the isomerization of lutein to meso-zeaxanthin an eye-specific carotenoid. The soluble form binds vitamin A (all-trans-retinol), making it available for LRAT processing to all-trans-retinyl ester. The membrane form, palmitoylated by LRAT, binds all-trans-retinyl esters, making them available for IMH (isomerohydrolase) processing to all-cis-retinol. The soluble form is regenerated by transferring its palmitoyl groups onto 11-cis-retinol, a reaction catalyzed by LRAT. The protein is Retinoid isomerohydrolase (Rpe65) of Mus musculus (Mouse).